A 126-amino-acid polypeptide reads, in one-letter code: Small ribosomal subunit protein uS12 (126 aa).

Residue D89 is modified to 3-methylthioaspartic acid.

It belongs to the universal ribosomal protein uS12 family. As to quaternary structure, part of the 30S ribosomal subunit. Contacts proteins S8 and S17. May interact with IF1 in the 30S initiation complex.

With S4 and S5 plays an important role in translational accuracy. Its function is as follows. Interacts with and stabilizes bases of the 16S rRNA that are involved in tRNA selection in the A site and with the mRNA backbone. Located at the interface of the 30S and 50S subunits, it traverses the body of the 30S subunit contacting proteins on the other side and probably holding the rRNA structure together. The combined cluster of proteins S8, S12 and S17 appears to hold together the shoulder and platform of the 30S subunit. This chain is Small ribosomal subunit protein uS12, found in Polynucleobacter necessarius subsp. necessarius (strain STIR1).